We begin with the raw amino-acid sequence, 161 residues long: Phosphopantetheine adenylyltransferase (161 aa).

S8 contacts substrate. Residues 8–9 (SF) and H16 each bind ATP. K40, T72, and R86 together coordinate substrate. ATP is bound by residues 87 to 89 (GLR), E97, and 122 to 128 (HSFLSSS).

This sequence belongs to the bacterial CoaD family. Homohexamer. Requires Mg(2+) as cofactor.

The protein localises to the cytoplasm. It carries out the reaction (R)-4'-phosphopantetheine + ATP + H(+) = 3'-dephospho-CoA + diphosphate. Its pathway is cofactor biosynthesis; coenzyme A biosynthesis; CoA from (R)-pantothenate: step 4/5. In terms of biological role, reversibly transfers an adenylyl group from ATP to 4'-phosphopantetheine, yielding dephospho-CoA (dPCoA) and pyrophosphate. This is Phosphopantetheine adenylyltransferase from Gloeobacter violaceus (strain ATCC 29082 / PCC 7421).